The following is a 402-amino-acid chain: NADH-quinone oxidoreductase subunit D (402 aa).

It belongs to the complex I 49 kDa subunit family. NDH-1 is composed of 14 different subunits. Subunits NuoB, C, D, E, F, and G constitute the peripheral sector of the complex.

Its subcellular location is the cell inner membrane. It carries out the reaction a quinone + NADH + 5 H(+)(in) = a quinol + NAD(+) + 4 H(+)(out). Functionally, NDH-1 shuttles electrons from NADH, via FMN and iron-sulfur (Fe-S) centers, to quinones in the respiratory chain. The immediate electron acceptor for the enzyme in this species is believed to be ubiquinone. Couples the redox reaction to proton translocation (for every two electrons transferred, four hydrogen ions are translocated across the cytoplasmic membrane), and thus conserves the redox energy in a proton gradient. The sequence is that of NADH-quinone oxidoreductase subunit D from Azorhizobium caulinodans (strain ATCC 43989 / DSM 5975 / JCM 20966 / LMG 6465 / NBRC 14845 / NCIMB 13405 / ORS 571).